A 98-amino-acid polypeptide reads, in one-letter code: NADH-ubiquinone oxidoreductase chain 4L (98 aa).

Transmembrane regions (helical) follow at residues P2 to F22, S29 to L49, and I61 to V81.

This sequence belongs to the complex I subunit 4L family. In terms of assembly, core subunit of respiratory chain NADH dehydrogenase (Complex I) which is composed of 45 different subunits.

The protein resides in the mitochondrion inner membrane. It carries out the reaction a ubiquinone + NADH + 5 H(+)(in) = a ubiquinol + NAD(+) + 4 H(+)(out). Its function is as follows. Core subunit of the mitochondrial membrane respiratory chain NADH dehydrogenase (Complex I) which catalyzes electron transfer from NADH through the respiratory chain, using ubiquinone as an electron acceptor. Part of the enzyme membrane arm which is embedded in the lipid bilayer and involved in proton translocation. The polypeptide is NADH-ubiquinone oxidoreductase chain 4L (MT-ND4L) (Microcebus mittermeieri (Mittermeier's mouse lemur)).